Here is a 71-residue protein sequence, read N- to C-terminus: Phosphatidylinositol N-acetylglucosaminyltransferase subunit Y (71 aa).

Position 1 (methionine 1) is a topological domain, cytoplasmic. A helical membrane pass occupies residues phenylalanine 2 to leucine 21. Over tyrosine 22 to serine 44 the chain is Lumenal. The helical transmembrane segment at leucine 45–leucine 65 threads the bilayer. Residues lysine 66–asparagine 71 lie on the Cytoplasmic side of the membrane.

As to quaternary structure, component of the glycosylphosphatidylinositol-N-acetylglucosaminyltransferase (GPI-GnT) complex composed at least by PIGA, PIGC, PIGH, PIGP, PIGQ, PIGY and DPM2.

Its subcellular location is the endoplasmic reticulum membrane. It functions in the pathway glycolipid biosynthesis; glycosylphosphatidylinositol-anchor biosynthesis. In terms of biological role, part of the glycosylphosphatidylinositol-N-acetylglucosaminyltransferase (GPI-GnT) complex that catalyzes the transfer of N-acetylglucosamine from UDP-N-acetylglucosamine to phosphatidylinositol and participates in the first step of GPI biosynthesis. May act by regulating the catalytic subunit PIGA. This Xenopus tropicalis (Western clawed frog) protein is Phosphatidylinositol N-acetylglucosaminyltransferase subunit Y.